The following is a 322-amino-acid chain: Lipoyl synthase (322 aa).

Residues 1-24 (MVTVLDTVSKPRPRHPEKAHRPDQ) form a disordered region. Basic and acidic residues predominate over residues 14 to 24 (RHPEKAHRPDQ). Positions 59, 64, 70, 85, 89, 92, and 298 each coordinate [4Fe-4S] cluster. The 217-residue stretch at 71–287 (WDKKHATFMI…ETIAYTKGFL (217 aa)) folds into the Radical SAM core domain.

The protein belongs to the radical SAM superfamily. Lipoyl synthase family. It depends on [4Fe-4S] cluster as a cofactor.

The protein resides in the cytoplasm. The enzyme catalyses [[Fe-S] cluster scaffold protein carrying a second [4Fe-4S](2+) cluster] + N(6)-octanoyl-L-lysyl-[protein] + 2 oxidized [2Fe-2S]-[ferredoxin] + 2 S-adenosyl-L-methionine + 4 H(+) = [[Fe-S] cluster scaffold protein] + N(6)-[(R)-dihydrolipoyl]-L-lysyl-[protein] + 4 Fe(3+) + 2 hydrogen sulfide + 2 5'-deoxyadenosine + 2 L-methionine + 2 reduced [2Fe-2S]-[ferredoxin]. It functions in the pathway protein modification; protein lipoylation via endogenous pathway; protein N(6)-(lipoyl)lysine from octanoyl-[acyl-carrier-protein]: step 2/2. Catalyzes the radical-mediated insertion of two sulfur atoms into the C-6 and C-8 positions of the octanoyl moiety bound to the lipoyl domains of lipoate-dependent enzymes, thereby converting the octanoylated domains into lipoylated derivatives. The protein is Lipoyl synthase of Chelativorans sp. (strain BNC1).